The primary structure comprises 206 residues: ATP phosphoribosyltransferase (206 aa).

The protein belongs to the ATP phosphoribosyltransferase family. Short subfamily. Heteromultimer composed of HisG and HisZ subunits.

The protein resides in the cytoplasm. The catalysed reaction is 1-(5-phospho-beta-D-ribosyl)-ATP + diphosphate = 5-phospho-alpha-D-ribose 1-diphosphate + ATP. Its pathway is amino-acid biosynthesis; L-histidine biosynthesis; L-histidine from 5-phospho-alpha-D-ribose 1-diphosphate: step 1/9. Its function is as follows. Catalyzes the condensation of ATP and 5-phosphoribose 1-diphosphate to form N'-(5'-phosphoribosyl)-ATP (PR-ATP). Has a crucial role in the pathway because the rate of histidine biosynthesis seems to be controlled primarily by regulation of HisG enzymatic activity. This is ATP phosphoribosyltransferase from Geobacillus sp. (strain WCH70).